The primary structure comprises 83 residues: Small ribosomal subunit protein uS17 (83 aa).

It belongs to the universal ribosomal protein uS17 family. As to quaternary structure, part of the 30S ribosomal subunit.

Functionally, one of the primary rRNA binding proteins, it binds specifically to the 5'-end of 16S ribosomal RNA. The sequence is that of Small ribosomal subunit protein uS17 from Chlamydia trachomatis serovar L2 (strain ATCC VR-902B / DSM 19102 / 434/Bu).